The following is a 356-amino-acid chain: Cysteine protease XCP2 (356 aa).

Residues 1-26 form the signal peptide; that stretch reads MALSSPSRILCFALALSAASLSLSFA. The propeptide at 27–137 is activation peptide; that stretch reads SSHDYSIVGY…AEFAYRDVEA (111 aa). 3 disulfides stabilise this stretch: Cys-159/Cys-201, Cys-193/Cys-234, and Cys-292/Cys-343. The active site involves Cys-162. N-linked (GlcNAc...) asparagine glycosylation occurs at Asn-181. Residues His-298 and Asn-318 contribute to the active site.

This sequence belongs to the peptidase C1 family. Interacts with PRN2. In terms of tissue distribution, mostly expressed in roots, stems and flowers. Confined to tracheary elements, and specifically to xylem.

The protein localises to the vacuole. It is found in the cell membrane. Its function is as follows. Cysteine protease involved in xylem tracheary element (TE) autolysis during xylogenesis in roots. Participates in micro autolysis within the intact central vacuole before mega autolysis is initiated by tonoplast implosion. Involved in susceptibility to the bacterial plant pathogen Ralstonia solanacearum. The polypeptide is Cysteine protease XCP2 (Arabidopsis thaliana (Mouse-ear cress)).